Consider the following 175-residue polypeptide: Disulfide bond formation protein B (175 aa).

Residues 1–13 (MVSNWLDAAPRRV) lie on the Cytoplasmic side of the membrane. A helical transmembrane segment spans residues 14-30 (LALISAACIAMLAFGMY). Residues 31–48 (LQHVVGLEPCPMCIVQRY) lie on the Periplasmic side of the membrane. Cysteines 40 and 43 form a disulfide. Residues 49–65 (ALIGVAVFTGLGSLRGG) form a helical membrane-spanning segment. The Cytoplasmic portion of the chain corresponds to 66-70 (RGWWM). The chain crosses the membrane as a helical span at residues 71 to 88 (TWGVLALLLSGFGAFVAA). The Periplasmic portion of the chain corresponds to 89-144 (RQSWLQWYPPEIATCGRDFYGMIENFPISRAIPMIFRGSGDCAAIDWTFLGGSIAN). Cysteines 103 and 130 form a disulfide. A helical transmembrane segment spans residues 145-163 (WSFVCFVVMALVLLVMLLR). The Cytoplasmic portion of the chain corresponds to 164 to 175 (APRPARGGFSAA).

The protein belongs to the DsbB family.

Its subcellular location is the cell inner membrane. Required for disulfide bond formation in some periplasmic proteins. Acts by oxidizing the DsbA protein. This is Disulfide bond formation protein B from Paracidovorax citrulli (strain AAC00-1) (Acidovorax citrulli).